We begin with the raw amino-acid sequence, 32 residues long: Photosystem II reaction center protein T (32 aa).

A helical transmembrane segment spans residues 3–23 (ALVYTFLLIGTLMVIFFAVFF).

It belongs to the PsbT family. In terms of assembly, PSII is composed of 1 copy each of membrane proteins PsbA, PsbB, PsbC, PsbD, PsbE, PsbF, PsbH, PsbI, PsbJ, PsbK, PsbL, PsbM, PsbT, PsbX, PsbY, PsbZ, Psb30/Ycf12, at least 3 peripheral proteins of the oxygen-evolving complex and a large number of cofactors. It forms dimeric complexes.

The protein localises to the plastid. Its subcellular location is the chloroplast thylakoid membrane. Found at the monomer-monomer interface of the photosystem II (PS II) dimer, plays a role in assembly and dimerization of PSII. PSII is a light-driven water plastoquinone oxidoreductase, using light energy to abstract electrons from H(2)O, generating a proton gradient subsequently used for ATP formation. The sequence is that of Photosystem II reaction center protein T from Trieres chinensis (Marine centric diatom).